Reading from the N-terminus, the 365-residue chain is Green-sensitive opsin P521 (365 aa).

Residues 1 to 51 (MTEAWNVAVFAARRSRDDDDTTRGSVFTYTNTNNTRGPFEGPNYHIAPRWV) lie on the Extracellular side of the membrane. A glycan (N-linked (GlcNAc...) asparagine) is linked at Asn-33. The helical transmembrane segment at 52-76 (YNLVSFFMIIVVIASCFTNGLVLVA) threads the bilayer. The Cytoplasmic portion of the chain corresponds to 77–88 (TAKFKKLRHPLN). A helical transmembrane segment spans residues 89 to 113 (WILVNLAFVDLVETLVASTISVFNQ). The Extracellular portion of the chain corresponds to 114–128 (IFGYFILGHPLCVIE). Cysteines 125 and 202 form a disulfide. A helical membrane pass occupies residues 129–148 (GYVVSSCGITGLWSLAIISW). Residues 149 to 167 (ERWFVVCKPFGNIKFDSKL) lie on the Cytoplasmic side of the membrane. A helical membrane pass occupies residues 168 to 191 (AIIGIVFSWVWAWGWSAPPIFGWS). Topologically, residues 192–217 (RYWPHGLKTSCGPDVFSGSVELGCQS) are extracellular. The chain crosses the membrane as a helical span at residues 218–245 (FMLTLMITCCFLPLFIIIVCYLQVWMAI). Over 246–267 (RAVAAQQKESESTQKAEREVSR) the chain is Cytoplasmic. The helical transmembrane segment at 268–291 (MVVVMIVAFCICWGPYASFVSFAA) threads the bilayer. Topologically, residues 292-299 (ANPGYAFH) are extracellular. A helical transmembrane segment spans residues 300–324 (PLAAALPAYFAKSATIYNPVIYVFM). Lys-311 is modified (N6-(retinylidene)lysine). At 325–365 (NRQFRNCIMQLFGKKVDDGSEASTTSRTEVSSVSNSSVAPA) the chain is on the cytoplasmic side. A disordered region spans residues 342-365 (DGSEASTTSRTEVSSVSNSSVAPA). Residues 345 to 365 (EASTTSRTEVSSVSNSSVAPA) show a composition bias toward low complexity.

Belongs to the G-protein coupled receptor 1 family. Opsin subfamily. Post-translationally, phosphorylated on some or all of the serine and threonine residues present in the C-terminal region. As to expression, in this lizard the color pigments are found in the rod-shaped photoreceptor cells which have been derived from ancestral cone-like photoreceptors.

The protein resides in the membrane. Its function is as follows. Visual pigments are the light-absorbing molecules that mediate vision. They consist of an apoprotein, opsin, covalently linked to cis-retinal. This Gekko gecko (Tokay gecko) protein is Green-sensitive opsin P521.